We begin with the raw amino-acid sequence, 503 residues long: 3-octaprenyl-4-hydroxybenzoate carboxy-lyase (503 aa).

N176 is a Mn(2+) binding site. Prenylated FMN contacts are provided by residues 179 to 181 (IYR), 193 to 195 (RWL), and 198 to 199 (RG). E242 provides a ligand contact to Mn(2+). The active-site Proton donor is D303.

The protein belongs to the UbiD family. In terms of assembly, homohexamer. Prenylated FMN serves as cofactor. It depends on Mn(2+) as a cofactor.

It localises to the cell membrane. The catalysed reaction is a 4-hydroxy-3-(all-trans-polyprenyl)benzoate + H(+) = a 2-(all-trans-polyprenyl)phenol + CO2. Its pathway is cofactor biosynthesis; ubiquinone biosynthesis. Its function is as follows. Catalyzes the decarboxylation of 3-octaprenyl-4-hydroxy benzoate to 2-octaprenylphenol, an intermediate step in ubiquinone biosynthesis. The chain is 3-octaprenyl-4-hydroxybenzoate carboxy-lyase from Ralstonia nicotianae (strain ATCC BAA-1114 / GMI1000) (Ralstonia solanacearum).